The primary structure comprises 125 residues: UPF0102 protein CCNA_00142 (125 aa).

This sequence belongs to the UPF0102 family.

The polypeptide is UPF0102 protein CCNA_00142 (Caulobacter vibrioides (strain NA1000 / CB15N) (Caulobacter crescentus)).